Consider the following 75-residue polypeptide: Putative defensin-like protein 126 (75 aa).

Residues Met1 to Gly24 form the signal peptide. Cystine bridges form between Cys29-Cys73, Cys38-Cys57, Cys43-Cys67, and Cys47-Cys69.

Belongs to the DEFL family.

The protein resides in the secreted. This Arabidopsis thaliana (Mouse-ear cress) protein is Putative defensin-like protein 126 (LCR6).